The primary structure comprises 870 residues: MOG interacting and ectopic P-granules protein 1 (870 aa).

The disordered stretch occupies residues Met1–Ala244. Positions Leu9–Val20 are enriched in polar residues. Positions Glu41 to Met51 are enriched in basic and acidic residues. 3 stretches are compositionally biased toward acidic residues: residues Glu77 to Gly99, Ile129 to Glu142, and Ile203 to Gln214. C2H2-type zinc fingers lie at residues His421 to His444 and Phe450 to His473. The CCHC-type zinc finger occupies Tyr486–Cys508. Composition is skewed to polar residues over residues Leu673–Thr688 and Lys695–Ser708. The interval Leu673 to Ser708 is disordered. 4 C2H2-type zinc fingers span residues Phe713–His736, Leu753–His776, Gly794–His815, and Tyr826–His849. The disordered stretch occupies residues Ser847 to Asp870. Residues Pro850–Asp870 show a composition bias toward basic and acidic residues.

Interacts with hda-1, let-418, lin-1, mog-1, mog-4, mog-5, mog-6, pie-1 and unc-98. Post-translationally, sumoylated. As to expression, expressed in somatic cells of embryos, the head, hypodermis and tail of larvae and the germline of adults, including oocytes but not mature sperm and spermatocytes.

It localises to the nucleus. Its function is as follows. Has a broad role in development, specifically in the genetic pathway SynMuvB that negatively regulates specification of the vulval cell fate. Required for fem-3 3'-UTR-mediated repression in the regulation of the sperm/oocyte switch. Acts by regulating the translation of fem-3 mRNA, by binding to its 3'-UTR. This chain is MOG interacting and ectopic P-granules protein 1, found in Caenorhabditis elegans.